The primary structure comprises 207 residues: Imidazole glycerol phosphate synthase subunit HisH (207 aa).

The Glutamine amidotransferase type-1 domain occupies 1–207 (MIAIVDYNMG…ENFTKYRNLK (207 aa)). Catalysis depends on Cys-79, which acts as the Nucleophile. Catalysis depends on residues His-185 and Glu-187.

In terms of assembly, heterodimer of HisH and HisF.

The protein resides in the cytoplasm. The catalysed reaction is 5-[(5-phospho-1-deoxy-D-ribulos-1-ylimino)methylamino]-1-(5-phospho-beta-D-ribosyl)imidazole-4-carboxamide + L-glutamine = D-erythro-1-(imidazol-4-yl)glycerol 3-phosphate + 5-amino-1-(5-phospho-beta-D-ribosyl)imidazole-4-carboxamide + L-glutamate + H(+). It catalyses the reaction L-glutamine + H2O = L-glutamate + NH4(+). Its pathway is amino-acid biosynthesis; L-histidine biosynthesis; L-histidine from 5-phospho-alpha-D-ribose 1-diphosphate: step 5/9. Functionally, IGPS catalyzes the conversion of PRFAR and glutamine to IGP, AICAR and glutamate. The HisH subunit catalyzes the hydrolysis of glutamine to glutamate and ammonia as part of the synthesis of IGP and AICAR. The resulting ammonia molecule is channeled to the active site of HisF. The polypeptide is Imidazole glycerol phosphate synthase subunit HisH (Sulfurimonas denitrificans (strain ATCC 33889 / DSM 1251) (Thiomicrospira denitrificans (strain ATCC 33889 / DSM 1251))).